The sequence spans 202 residues: MNPEYDYLFKLLLIGDSGVGKSCLLLRFADDSYLDSYISTIGVDFKIRTVEQDGKTIKLQIWDTAGQERFRTITSSYYRGAHGIIVTYDVTDLESFNNVKQWLNEIDRYASENVNKLLVGNKCDLTSQKVVSTETAKAFADELGIPFLETSAKNATNVEEAFMAMTAAIKTRMASQPAGGSKPPTVQIRGQPVNQQSGCCSS.

Residues 15–23 (GDSGVGKSC), 33–40 (YLDSYIST), 63–67 (DTAGQ), 121–124 (NKCD), and 151–153 (SAK) contribute to the GTP site. An Effector region motif is present at residues 37–45 (YISTIGVDF). The interval 174–202 (ASQPAGGSKPPTVQIRGQPVNQQSGCCSS) is disordered. Residues 192 to 202 (PVNQQSGCCSS) show a composition bias toward polar residues. S-geranylgeranyl cysteine attachment occurs at residues C199 and C200.

This sequence belongs to the small GTPase superfamily. Rab family.

It is found in the cell membrane. Its subcellular location is the golgi apparatus. The protein resides in the trans-Golgi network membrane. It localises to the golgi apparatus membrane. Functionally, protein transport. Regulator of membrane traffic from the Golgi apparatus towards the endoplasmic reticulum (ER). This Arabidopsis thaliana (Mouse-ear cress) protein is Ras-related protein RABD2c (RABD2C).